The chain runs to 322 residues: MKKIAVLTSGGDAPGMNAAIRAVVRTAIYNGIEVYGVYQGYLGLINDDLKKLELGSVGDTIQRGGTFLYSARCPEFKDKEVRAKAIENLRSRGIDGLVVIGGDGSYRGAQRISEECPEIQTIGIPGTIDNDIPGTDYTIGFDSALNTIIESVDKIRDTASSHARTFIVEVMGRDCGDLALWAGLAVGAETIIVPEEKVDIKDVAEKIESGIKRGKKHSIVVVAEGVMGGQLCADELAKYIHVDARVSVLGHIQRGGSPTGQDRVLASRLGGHAVELLMDGKTALGVGIKQNQLTQTKFEDIFNNKGSKFDKQMYKLAQELSI.

Gly-11 is an ATP binding site. 21–25 lines the ADP pocket; the sequence is RAVVR. ATP-binding positions include 72-73 and 102-105; these read RC and GDGS. Asp-103 contacts Mg(2+). Position 127–129 (127–129) interacts with substrate; that stretch reads TID. Asp-129 functions as the Proton acceptor in the catalytic mechanism. Arg-156 is a binding site for ADP. Substrate-binding positions include Arg-164 and 171–173; that span reads MGR. Residues 187-189, Arg-213, and 215-217 each bind ADP; these read GAE and KKH. Residues Glu-224, Arg-245, and 251–254 each bind substrate; that span reads HIQR.

Belongs to the phosphofructokinase type A (PFKA) family. ATP-dependent PFK group I subfamily. Prokaryotic clade 'B1' sub-subfamily. Homotetramer. It depends on Mg(2+) as a cofactor.

It is found in the cytoplasm. It carries out the reaction beta-D-fructose 6-phosphate + ATP = beta-D-fructose 1,6-bisphosphate + ADP + H(+). The protein operates within carbohydrate degradation; glycolysis; D-glyceraldehyde 3-phosphate and glycerone phosphate from D-glucose: step 3/4. Its activity is regulated as follows. Allosterically activated by ADP and other diphosphonucleosides, and allosterically inhibited by phosphoenolpyruvate. In terms of biological role, catalyzes the phosphorylation of D-fructose 6-phosphate to fructose 1,6-bisphosphate by ATP, the first committing step of glycolysis. The polypeptide is ATP-dependent 6-phosphofructokinase (Staphylococcus carnosus (strain TM300)).